We begin with the raw amino-acid sequence, 393 residues long: NAD(P)H-quinone oxidoreductase subunit H, chloroplastic (393 aa).

The protein belongs to the complex I 49 kDa subunit family. As to quaternary structure, NDH is composed of at least 16 different subunits, 5 of which are encoded in the nucleus.

It is found in the plastid. The protein resides in the chloroplast thylakoid membrane. The catalysed reaction is a plastoquinone + NADH + (n+1) H(+)(in) = a plastoquinol + NAD(+) + n H(+)(out). It catalyses the reaction a plastoquinone + NADPH + (n+1) H(+)(in) = a plastoquinol + NADP(+) + n H(+)(out). Functionally, NDH shuttles electrons from NAD(P)H:plastoquinone, via FMN and iron-sulfur (Fe-S) centers, to quinones in the photosynthetic chain and possibly in a chloroplast respiratory chain. The immediate electron acceptor for the enzyme in this species is believed to be plastoquinone. Couples the redox reaction to proton translocation, and thus conserves the redox energy in a proton gradient. This Fagopyrum esculentum subsp. ancestrale (Wild buckwheat) protein is NAD(P)H-quinone oxidoreductase subunit H, chloroplastic.